Reading from the N-terminus, the 510-residue chain is Abscisic acid 8'-hydroxylase 2 (510 aa).

A helical membrane pass occupies residues 3–23 (FLLFFVFVTAAVLCFVVPAFL). Cys-441 is a heme binding site.

Belongs to the cytochrome P450 family. Heme is required as a cofactor.

Its subcellular location is the membrane. It carries out the reaction 2-cis-(+)-abscisate + reduced [NADPH--hemoprotein reductase] + O2 = (+)-8'-hydroxyabscisate + oxidized [NADPH--hemoprotein reductase] + H2O + H(+). It participates in plant hormone degradation; abscisic acid degradation. Its function is as follows. Involved in the oxidative degradation of abscisic acid. The polypeptide is Abscisic acid 8'-hydroxylase 2 (CYP707A6) (Oryza sativa subsp. japonica (Rice)).